We begin with the raw amino-acid sequence, 110 residues long: Membrane-associated protein slr1513 (110 aa).

The protein localises to the cellular thylakoid membrane. The protein resides in the cell membrane. The chain is Membrane-associated protein slr1513 from Synechocystis sp. (strain ATCC 27184 / PCC 6803 / Kazusa).